Here is a 71-residue protein sequence, read N- to C-terminus: Alpha-elapitoxin-Nn3a (71 aa).

Disulfide bonds link cysteine 3-cysteine 20, cysteine 14-cysteine 42, cysteine 26-cysteine 30, cysteine 46-cysteine 56, and cysteine 57-cysteine 62.

This sequence belongs to the three-finger toxin family. Long-chain subfamily. Type II alpha-neurotoxin sub-subfamily. Expressed by the venom gland.

It is found in the secreted. Functionally, nicotinic acetylcholine receptor antagonist. Binds to muscle nicotinic acetylcholine receptor (nAChR) and inhibits acetylcholine from binding to the receptor, thereby impairing neuromuscular transmission. Produces peripheral paralysis by blocking neuromuscular transmission at the postsynaptic site. Induces concentration-dependent inhibition of indirect twitches and abolishes contractile responses of tissues to exogenous acetylcholine and carbachol, in the chick biventer cervicis nerve-muscle preparation at 100-300 nM (in vitro). Prior incubation of tissues with Indian polyvalent antivenom (1 ml/0.6 mg) prevents the neurotoxic effects at 100 nM (in vitro). Addition of Indian polyvalent antivenom (1 ml/0.6 mg) at the t90 time point partially restores the neurotoxic effects (in vitro). Displays a reversible antagonism of concentration-response curves to carbachol, with a pA2 of 8.17 (in vitro). This chain is Alpha-elapitoxin-Nn3a, found in Naja naja (Indian cobra).